The following is a 301-amino-acid chain: MTVKRILIVSGTHGNEINPIWAVKQFNREENKFKNGIEYEYIIGNPIAYEKGCRYIDADLNRSFKASKNYDQHKNSFYETNRANFLVDEFGIDGSKPCQIAIDLHTTTANMGTSIVLYGRRLKDFCLAALLQNKFGLPIYLHEKDEAQTGFLVEAWPCGLVIEIGAVAQNFYDPKIIDRFSLIISSLREEIDKLKNNLIELPKELVVHVHQGSIDYPRDEKGDIDGLIHPERINQDWKMIKKGDPLFLDSQGIIHKYDGDQLIWPVFIGEVAYREKKIAMSYTKKEVIFSKEKWVQEFASL.

Residues histidine 13 and glutamate 16 each contribute to the Zn(2+) site. Residues arginine 54 and 61 to 62 (NR) each bind substrate. A Zn(2+)-binding site is contributed by histidine 105. Glutamate 163 and tyrosine 273 together coordinate substrate.

It belongs to the AspA/AstE family. Aspartoacylase subfamily. Zn(2+) serves as cofactor.

The catalysed reaction is an N-acyl-L-aspartate + H2O = a carboxylate + L-aspartate. This Prochlorococcus marinus (strain MIT 9215) protein is Probable aspartoacylase.